A 209-amino-acid chain; its full sequence is MLTAIRKNGLILAVFACVSTGLVALTYALTAEQIQQQEQKQLLQVLNQVIPHKYHDNPLAQACTLVNDDKLGTAKTMHAYLAQRDGQPTAIAIETIAPDGYNGEIKLIVGIANNGTVLGVRVLAHQETPGLGDKIDLRISNWVLGFNGQQVTADNQDDWKVRKDGGQFDQFTGATITPRAVVLAVKKAVEYVNQHQQQLHNQPNPCEGQ.

The chain crosses the membrane as a helical span at residues 9-29 (GLILAVFACVSTGLVALTYAL). Thr-175 carries the FMN phosphoryl threonine modification.

The protein belongs to the RnfG family. As to quaternary structure, the complex is composed of six subunits: RnfA, RnfB, RnfC, RnfD, RnfE and RnfG. It depends on FMN as a cofactor.

Its subcellular location is the cell inner membrane. Part of a membrane-bound complex that couples electron transfer with translocation of ions across the membrane. This chain is Ion-translocating oxidoreductase complex subunit G, found in Vibrio cholerae serotype O1 (strain ATCC 39315 / El Tor Inaba N16961).